Here is a 156-residue protein sequence, read N- to C-terminus: Baculoviral IAP repeat-containing protein 5.2 (156 aa).

The stretch at 30-100 (RLSTFANWPF…KHSPSCLFIA (71 aa)) is one BIR repeat. Thr-46 carries the phosphothreonine; by CDK1 modification. Cys-69, Cys-72, His-89, and Cys-96 together coordinate Zn(2+).

It belongs to the IAP family. As to quaternary structure, component of the CPC at least composed of survivin/birc5, incenp, cdca8/borealin and/or cdca9/dasra-A, and aurkb/aurora-B. Interacts directly with incenp (via N-terminus). Interacts with rxra; the interaction is stronger in the absence of 9-cis retinoic acids. In terms of processing, ubiquitination is required for centrosome-targeting.

It is found in the cytoplasm. Its subcellular location is the nucleus. It localises to the chromosome. The protein localises to the centromere. The protein resides in the cytoskeleton. It is found in the spindle. In terms of biological role, component of the chromosomal passenger complex (CPC), a complex that acts as a key regulator of mitosis. The CPC complex has essential functions at the centromere in ensuring correct chromosome alignment and segregation and is required for chromatin-induced microtubule stabilization and spindle assembly. Does not appear to exhibit anti-apoptotic activity. Plays a role in increasing blood vessel size during development. The polypeptide is Baculoviral IAP repeat-containing protein 5.2 (birc5.2) (Xenopus tropicalis (Western clawed frog)).